Here is a 120-residue protein sequence, read N- to C-terminus: uncharacterized protein (120 aa).

Residues 3-120 (IRYKKAFEKI…EKCEICHGSE (118 aa)) enclose the N-acetyltransferase domain.

This is an uncharacterized protein from Bacillus methanolicus.